The sequence spans 154 residues: SKP1-like protein 13 (154 aa).

Positions 96–154 (MLAANYLNIKDLLDLGCQTVADMITGKKPDEIRALLGIENDFTPEEEEEIRKENQWAFE) are interaction with the F-box domain of F-box proteins.

This sequence belongs to the SKP1 family. Part of a SCF (SKP1-cullin-F-box) protein ligase complex. Interacts with ADO3/FKF1, EBF1, PP2A13, SKIP15, SKIP16, CPR1/CPR30, At1g55000, At3g61590, At1g67340, At1g78100, At3g04660, At4g38940, At4g39550 and At5g49610. As to expression, mostly expressed in inflorescences, and, to a lower extent, in seedlings and siliques. Also detected in cotyledons, leaves, pollen and seeds.

It is found in the nucleus. Its pathway is protein modification; protein ubiquitination. Involved in ubiquitination and subsequent proteasomal degradation of target proteins. Together with CUL1, RBX1 and a F-box protein, it forms a SCF E3 ubiquitin ligase complex. The functional specificity of this complex depends on the type of F-box protein. In the SCF complex, it serves as an adapter that links the F-box protein to CUL1. The protein is SKP1-like protein 13 (ASK13) of Arabidopsis thaliana (Mouse-ear cress).